An 85-amino-acid chain; its full sequence is MSDGKKTKTTVNIYGQHFTIIGEESKAHMRHVAGVVDDKMREINEKNPYLDINKLAVLTAVNVVHDYMKLQEKYEILERQLKEKE.

Residues 59-85 (TAVNVVHDYMKLQEKYEILERQLKEKE) adopt a coiled-coil conformation.

It belongs to the ZapA family. Type 2 subfamily. In terms of assembly, homodimer. Interacts with FtsZ.

The protein resides in the cytoplasm. Activator of cell division through the inhibition of FtsZ GTPase activity, therefore promoting FtsZ assembly into bundles of protofilaments necessary for the formation of the division Z ring. It is recruited early at mid-cell but it is not essential for cell division. The sequence is that of Cell division protein ZapA from Bacillus velezensis (strain DSM 23117 / BGSC 10A6 / LMG 26770 / FZB42) (Bacillus amyloliquefaciens subsp. plantarum).